Consider the following 154-residue polypeptide: Jupiter microtubule associated homolog 1 (154 aa).

The residue at position 1 (methionine 1) is an N-acetylmethionine. Residues 1-19 show a composition bias toward polar residues; the sequence is MTTTTTFKGVDPNSRNSSR. Residues 1 to 154 form a disordered region; that stretch reads MTTTTTFKGV…PGGKSSLVLG (154 aa). Threonine 2 is subject to N-acetylthreonine; in Hematological and neurological expressed 1 protein, N-terminally processed. 2 positions are modified to phosphoserine: serine 28 and serine 31. Residue threonine 54 is modified to Phosphothreonine. Residues serine 71, serine 80, serine 87, serine 88, and serine 92 each carry the phosphoserine modification. The segment covering 80–91 has biased composition (polar residues); that stretch reads SGPQRRNSSEAN. The segment covering 96–108 has biased composition (basic and acidic residues); that stretch reads LDLKGEGDVHENV. The segment covering 125 to 138 has biased composition (pro residues); it reads PAAPVPSPVAPAPV. Position 131 is a phosphoserine (serine 131). Residue lysine 148 is modified to N6-acetyllysine.

It belongs to the JUPITER family. In terms of assembly, interacts with the complex composed, at least, of APC, CTNNB1 and GSK3B; the interaction takes place with the inactive form of GSK3B (phosphorylated at 'Ser-9').

The protein resides in the nucleus. The protein localises to the cytoplasm. Modulates negatively AKT-mediated GSK3B signaling. Induces CTNNB1 'Ser-33' phosphorylation and degradation through the suppression of the inhibitory 'Ser-9' phosphorylation of GSK3B, which represses the function of the APC:CTNNB1:GSK3B complex and the interaction with CDH1/E-cadherin in adherent junctions. Plays a role in the regulation of cell cycle and cell adhesion. Has an inhibitory role on AR-signaling pathway through the induction of receptor proteasomal degradation. This is Jupiter microtubule associated homolog 1 from Bos taurus (Bovine).